The following is a 353-amino-acid chain: Membrane lipoprotein TmpC (353 aa).

The first 20 residues, Met1–Gly20, serve as a signal peptide directing secretion. Cys21 carries the N-palmitoyl cysteine lipid modification. Cys21 carries S-diacylglycerol cysteine lipidation. Asp47 contributes to the guanosine binding site. Asp47 contacts inosine. Adenosine is bound by residues Asp47–Ser48 and Phe56. Asn57, Asp128, Phe206, Gly232, Asp258, and Lys280 together coordinate guanosine. Inosine-binding residues include Asn57 and Asp128. Positions 128, 206, 232, 258, and 280 each coordinate adenosine. Residues Gly232, Asp258, and Lys280 each coordinate inosine.

This sequence belongs to the BMP lipoprotein family. Monomer.

It localises to the cell membrane. Binds purine nucleosides and may play a role in purine nucleoside uptake. May be part of an ABC-type nucleoside uptake system. Has highest affinity for guanosine, followed by inosine and adenosine. Has very low affinity for cytidine and does not bind thymidine. This is Membrane lipoprotein TmpC (tmpC) from Treponema pallidum (strain Nichols).